The sequence spans 433 residues: Vesicle-associated protein (433 aa).

2 consecutive repeat copies span residues 112-122 and 219-229. The interval 112-350 is 3 X 11 AA repeats of G-G-G-I-G-G-G-L-G-G-G; sequence GGGIGGGLGG…GGIGGGLGGG (239 aa). The short motif at 266 to 274 is the Nuclear localization signal element; the sequence is VDGKKKGKG. Repeat unit 3 spans residues 340–350; that stretch reads GGGIGGGLGGG. Disordered stretches follow at residues 366-389 and 411-433; these read RVGG…DGDG and HGKG…NVSG. The segment covering 423–433 has biased composition (basic and acidic residues); sequence DIERPDLNVSG.

In terms of tissue distribution, egg cortex.

The protein localises to the microsome membrane. It is found in the nucleus. It localises to the endoplasmic reticulum membrane. In terms of biological role, may function as a multidomain RNA-binding protein. May play a role in nuclear RNA processing and in early development. The protein is Vesicle-associated protein (VAP-1) of Strongylocentrotus purpuratus (Purple sea urchin).